The chain runs to 502 residues: Sodium/proline symporter (502 aa).

13 helical membrane passes run 6-26 (PMLV…FIAW), 42-62 (LGPF…WLLM), 68-88 (IFLS…GAWI), 127-147 (IISA…GIVA), 163-183 (ALWA…FLAV), 192-212 (SLMI…VGGF), 235-255 (FVAI…PHIL), 276-296 (TWMI…IAYF), 320-340 (ILFN…AVMS), 371-391 (LVWV…ALAA), 398-418 (LGLV…VVLF), 430-450 (ALAG…YGWL), and 452-472 (LYEI…FSLL).

Belongs to the sodium:solute symporter (SSF) (TC 2.A.21) family.

It localises to the cell inner membrane. The enzyme catalyses L-proline(in) + Na(+)(in) = L-proline(out) + Na(+)(out). Its function is as follows. Catalyzes the sodium-dependent uptake of extracellular L-proline. The protein is Sodium/proline symporter of Salmonella typhimurium (strain LT2 / SGSC1412 / ATCC 700720).